Consider the following 417-residue polypeptide: Serine--tRNA ligase (417 aa).

Residue 224–226 coordinates L-serine; that stretch reads TSE. Residues 255-257 and Val-271 contribute to the ATP site; that span reads RRE. L-serine is bound at residue Glu-278. 342 to 345 contacts ATP; sequence ELTS. Thr-377 provides a ligand contact to L-serine.

It belongs to the class-II aminoacyl-tRNA synthetase family. Type-1 seryl-tRNA synthetase subfamily. Homodimer. The tRNA molecule binds across the dimer.

Its subcellular location is the cytoplasm. The catalysed reaction is tRNA(Ser) + L-serine + ATP = L-seryl-tRNA(Ser) + AMP + diphosphate + H(+). It catalyses the reaction tRNA(Sec) + L-serine + ATP = L-seryl-tRNA(Sec) + AMP + diphosphate + H(+). Its pathway is aminoacyl-tRNA biosynthesis; selenocysteinyl-tRNA(Sec) biosynthesis; L-seryl-tRNA(Sec) from L-serine and tRNA(Sec): step 1/1. Its function is as follows. Catalyzes the attachment of serine to tRNA(Ser). Is also able to aminoacylate tRNA(Sec) with serine, to form the misacylated tRNA L-seryl-tRNA(Sec), which will be further converted into selenocysteinyl-tRNA(Sec). This chain is Serine--tRNA ligase, found in Mycobacterium leprae (strain TN).